Reading from the N-terminus, the 388-residue chain is Probable Na(+)/H(+) antiporter 3 (388 aa).

12 helical membrane-spanning segments follow: residues 2–22 (ESYYYVFFIILSIIFIVPNLL), 27–47 (IPAITSIMIAGIIIGPYGLNI), 53–73 (TLKILADFGAIMLMFLAGLEV), 81–101 (EFKNSLILSLFSLLIPGVGGY), 102–122 (LIGQYLGLGFIGSLLYAVIFA), 146–166 (IILSATIIVDLFTLLLLSVVI), 175–195 (VGTFLLETVLYIGVLLLAIPS), 215–235 (VLFIIFIAIIVGEVIGIHPIV), 263–283 (AIGYGFFIPIFFLVLGMETNI), 294–314 (LLLITLISAVALKFISGFIAL), 325–345 (TIGGLLTVPKISASLVAASIG), and 354–374 (EIFVTIVALSVITATITPIVV).

Belongs to the monovalent cation:proton antiporter 1 (CPA1) transporter (TC 2.A.36) family.

It is found in the cell membrane. Functionally, this is probably a Na(+)/H(+) antiporter. The protein is Probable Na(+)/H(+) antiporter 3 of Methanocaldococcus jannaschii (strain ATCC 43067 / DSM 2661 / JAL-1 / JCM 10045 / NBRC 100440) (Methanococcus jannaschii).